The chain runs to 244 residues: 14-3-3 protein beta/alpha (244 aa).

Met1 is subject to N-acetylmethionine. Ser184 carries the post-translational modification Phosphoserine.

Belongs to the 14-3-3 family. As to quaternary structure, homodimer, and heterodimer with other family members. Post-translationally, phosphorylated.

It localises to the cytoplasm. Its function is as follows. Adapter protein implicated in the regulation of a large spectrum of both general and specialized signaling pathways. Binds to a large number of partners, usually by recognition of a phosphoserine or phosphothreonine motif. Binding generally results in the modulation of the activity of the binding partner. This is 14-3-3 protein beta/alpha (YWHAB) from Gallus gallus (Chicken).